Reading from the N-terminus, the 438-residue chain is MLNYDIAVIGGGIAGYCAALNAIEAGKKTVLISQGQSALHFSSGSIDVMAKTPSGERVEAPFSAMASLPQQHPEHPYSKMLPNFVRQSLYWLVDQLKEQGLPLHCQQDESNHYRITPLGTLKATWLSQPFVYQHRQNVAFKRLLFVAVDGYRDFQPLLAKDNLKKHPDFQHCEIGEIQVTIPGCEALRRNPNELRSIDIARLLKQPQAFNSLCHQLMKHATQEDLVIMPAIMGNGDGLVLLQQLRRQTNLTLHEVPTMPPSLLGIRIEEALQKRFLKQGGVLLKGDQVLSGEWDEQGHLTSISTRNLGDIPLHAQAYILASGSYFSQGLKASLDKIVEPIFGLDMVAKPHRRQWRNDQFFSASAHPFMAFGVETDAMFRPSLNGQVCQNLYCCGSVLSGYDPVFEGSGGGVAVSTALAAVQRAMGLKQAMSVEEECVL.

Belongs to the anaerobic G-3-P dehydrogenase subunit B family. As to quaternary structure, composed of a catalytic GlpA/B dimer and of membrane bound GlpC. Requires FMN as cofactor.

It carries out the reaction a quinone + sn-glycerol 3-phosphate = dihydroxyacetone phosphate + a quinol. It functions in the pathway polyol metabolism; glycerol degradation via glycerol kinase pathway; glycerone phosphate from sn-glycerol 3-phosphate (anaerobic route): step 1/1. Functionally, conversion of glycerol 3-phosphate to dihydroxyacetone. Uses fumarate or nitrate as electron acceptor. The polypeptide is Anaerobic glycerol-3-phosphate dehydrogenase subunit B (Vibrio vulnificus (strain CMCP6)).